The chain runs to 81 residues: Protein L83L (81 aa).

Positions 1–28 (MDTSLKNNDGALEADNKNYQDYKDEPDK) are disordered. Over residues 14–28 (ADNKNYQDYKDEPDK) the composition is skewed to basic and acidic residues.

Belongs to the asfivirus L83L family. In terms of assembly, interacts with host IL1B.

The protein resides in the host cytoplasm. In terms of biological role, may subvert the host innate immune response by interacting with host IL1B and interfering with its function. In Ornithodoros (relapsing fever ticks), this protein is Protein L83L.